The following is a 321-amino-acid chain: D-alanine--D-alanine ligase (321 aa).

The ATP-grasp domain maps to 121 to 315 (RSWFLTNNIN…FTNLIEEIIK (195 aa)). 147-199 (PVKRPYVIKPLTQGSSIGVEVIFEEDDFNFADYNFPYGYQVIIEQYIKGRELQ) is a binding site for ATP. Mg(2+)-binding residues include E268, E282, and N284.

The protein belongs to the D-alanine--D-alanine ligase family. The cofactor is Mg(2+). Requires Mn(2+) as cofactor.

It is found in the cytoplasm. The catalysed reaction is 2 D-alanine + ATP = D-alanyl-D-alanine + ADP + phosphate + H(+). It functions in the pathway cell wall biogenesis; peptidoglycan biosynthesis. In terms of biological role, cell wall formation. This is D-alanine--D-alanine ligase from Rickettsia felis (strain ATCC VR-1525 / URRWXCal2) (Rickettsia azadi).